Reading from the N-terminus, the 348-residue chain is Dihydroorotase (348 aa).

Histidine 17 and histidine 19 together coordinate Zn(2+). Substrate contacts are provided by residues 19–21 (HLR) and asparagine 45. Residues lysine 103, histidine 140, and histidine 178 each contribute to the Zn(2+) site. Residue lysine 103 is modified to N6-carboxylysine. Histidine 140 contacts substrate. Leucine 223 is a binding site for substrate. Aspartate 251 contributes to the Zn(2+) binding site. Residue aspartate 251 is part of the active site. 2 residues coordinate substrate: histidine 255 and alanine 267.

This sequence belongs to the metallo-dependent hydrolases superfamily. DHOase family. Class II DHOase subfamily. As to quaternary structure, homodimer. Requires Zn(2+) as cofactor.

It catalyses the reaction (S)-dihydroorotate + H2O = N-carbamoyl-L-aspartate + H(+). It functions in the pathway pyrimidine metabolism; UMP biosynthesis via de novo pathway; (S)-dihydroorotate from bicarbonate: step 3/3. In terms of biological role, catalyzes the reversible cyclization of carbamoyl aspartate to dihydroorotate. The polypeptide is Dihydroorotase (Shigella flexneri serotype 5b (strain 8401)).